A 256-amino-acid polypeptide reads, in one-letter code: 5-oxoprolinase subunit A 2 (256 aa).

This sequence belongs to the LamB/PxpA family. In terms of assembly, forms a complex composed of PxpA, PxpB and PxpC.

The enzyme catalyses 5-oxo-L-proline + ATP + 2 H2O = L-glutamate + ADP + phosphate + H(+). Its function is as follows. Catalyzes the cleavage of 5-oxoproline to form L-glutamate coupled to the hydrolysis of ATP to ADP and inorganic phosphate. The protein is 5-oxoprolinase subunit A 2 of Bradyrhizobium diazoefficiens (strain JCM 10833 / BCRC 13528 / IAM 13628 / NBRC 14792 / USDA 110).